The following is a 103-amino-acid chain: Large ribosomal subunit protein bL21 (103 aa).

The protein belongs to the bacterial ribosomal protein bL21 family. Part of the 50S ribosomal subunit. Contacts protein L20.

This protein binds to 23S rRNA in the presence of protein L20. This Amoebophilus asiaticus (strain 5a2) protein is Large ribosomal subunit protein bL21.